Here is a 511-residue protein sequence, read N- to C-terminus: Sodium/proline symporter 2 (511 aa).

The next 13 helical transmembrane spans lie at Trp-16–Gly-36, Ile-54–Met-74, Leu-85–Val-105, Ile-139–Ser-159, Gly-175–Val-195, Val-204–Ile-224, Val-246–Ile-266, Ile-286–Phe-306, Ile-327–Ser-347, Phe-381–Trp-401, Leu-410–Leu-430, Thr-438–Ile-458, and Leu-467–Val-487.

The protein belongs to the sodium:solute symporter (SSF) (TC 2.A.21) family.

Its subcellular location is the cell membrane. It carries out the reaction L-proline(in) + Na(+)(in) = L-proline(out) + Na(+)(out). Functionally, catalyzes the sodium-dependent uptake of extracellular L-proline. The protein is Sodium/proline symporter 2 (putP2) of Staphylococcus saprophyticus subsp. saprophyticus (strain ATCC 15305 / DSM 20229 / NCIMB 8711 / NCTC 7292 / S-41).